The primary structure comprises 465 residues: ATP synthase subunit beta (465 aa).

149 to 156 is a binding site for ATP; sequence GGAGVGKT.

Belongs to the ATPase alpha/beta chains family. In terms of assembly, F-type ATPases have 2 components, CF(1) - the catalytic core - and CF(0) - the membrane proton channel. CF(1) has five subunits: alpha(3), beta(3), gamma(1), delta(1), epsilon(1). CF(0) has three main subunits: a(1), b(2) and c(9-12). The alpha and beta chains form an alternating ring which encloses part of the gamma chain. CF(1) is attached to CF(0) by a central stalk formed by the gamma and epsilon chains, while a peripheral stalk is formed by the delta and b chains.

The protein resides in the cell inner membrane. It catalyses the reaction ATP + H2O + 4 H(+)(in) = ADP + phosphate + 5 H(+)(out). Produces ATP from ADP in the presence of a proton gradient across the membrane. The catalytic sites are hosted primarily by the beta subunits. The sequence is that of ATP synthase subunit beta from Dictyoglomus thermophilum (strain ATCC 35947 / DSM 3960 / H-6-12).